The chain runs to 257 residues: 3-methyl-2-oxobutanoate hydroxymethyltransferase (257 aa).

Residues aspartate 42 and aspartate 86 each coordinate Mg(2+). 3-methyl-2-oxobutanoate-binding positions include aspartate 42 to serine 43, aspartate 86, and lysine 116. Glutamate 118 is a Mg(2+) binding site. The active-site Proton acceptor is glutamate 185.

The protein belongs to the PanB family. Homodecamer; pentamer of dimers. It depends on Mg(2+) as a cofactor.

The protein localises to the cytoplasm. It carries out the reaction 3-methyl-2-oxobutanoate + (6R)-5,10-methylene-5,6,7,8-tetrahydrofolate + H2O = 2-dehydropantoate + (6S)-5,6,7,8-tetrahydrofolate. It participates in cofactor biosynthesis; (R)-pantothenate biosynthesis; (R)-pantoate from 3-methyl-2-oxobutanoate: step 1/2. Catalyzes the reversible reaction in which hydroxymethyl group from 5,10-methylenetetrahydrofolate is transferred onto alpha-ketoisovalerate to form ketopantoate. The chain is 3-methyl-2-oxobutanoate hydroxymethyltransferase from Prochlorococcus marinus (strain MIT 9515).